We begin with the raw amino-acid sequence, 424 residues long: Hemagglutinin-esterase (424 aa).

An N-terminal signal peptide occupies residues 1–16 (MFLLPRFCLVCSIIGT). Residues 7-127 (FCLVCSIIGT…NNDIWMQNKG (121 aa)) form an esterase domain 1 region. Topologically, residues 17–392 (FGFENPPTNV…PICVYDPLPI (376 aa)) are virion surface. The active-site Nucleophile is the Ser-40. Residues Cys-44 and Cys-65 are joined by a disulfide bond. N-linked (GlcNAc...) asparagine; by host glycosylation is found at Asn-54, Asn-89, Asn-153, Asn-236, and Asn-301. 3 cysteine pairs are disulfide-bonded: Cys-113–Cys-162, Cys-197–Cys-276, and Cys-205–Cys-249. Positions 128–266 (LFYTQVYKKM…GNYLAISNEL (139 aa)) are receptor binding. The esterase domain 2 stretch occupies residues 267–379 (LLTVPTKAIC…NCPTAASIIS (113 aa)). An intrachain disulfide couples Cys-307 to Cys-312. Asn-316 carries N-linked (GlcNAc...) asparagine; by host glycosylation. Active-site charge relay system residues include Asp-326 and His-329. A disulfide bond links Cys-347 and Cys-371. Asn-358 is a glycosylation site (N-linked (GlcNAc...) asparagine; by host). Residues 393–413 (ILLGILLGVAVIVIVVLLLYF) form a helical membrane-spanning segment. Topologically, residues 414 to 424 (MVDNGIRQHYA) are intravirion.

It belongs to the influenza type C/coronaviruses hemagglutinin-esterase family. Homodimer; disulfide-linked. Forms a complex with the M protein in the pre-Golgi. Associates then with S-M complex to form a ternary complex S-M-HE. N-glycosylated in the host RER.

The protein resides in the virion membrane. It is found in the host cell membrane. It carries out the reaction N-acetyl-9-O-acetylneuraminate + H2O = N-acetylneuraminate + acetate + H(+). The enzyme catalyses N-acetyl-4-O-acetylneuraminate + H2O = N-acetylneuraminate + acetate + H(+). Structural protein that makes short spikes at the surface of the virus. Contains receptor binding and receptor-destroying activities. Mediates de-O-acetylation of N-acetyl-4-O-acetylneuraminic acid, which is probably the receptor determinant recognized by the virus on the surface of erythrocytes and susceptible cells. This receptor-destroying activity is important for virus release as it probably helps preventing self-aggregation and ensures the efficient spread of the progeny virus from cell to cell. May serve as a secondary viral attachment protein for initiating infection, the spike protein being the major one. May become a target for both the humoral and the cellular branches of the immune system. This is Hemagglutinin-esterase from Sus scrofa (Pig).